Consider the following 232-residue polypeptide: Nuclear transcription factor Y subunit nfyc-1 (232 aa).

Residues 191–232 (TVPTTSTNGPGHMSEDSFQDPNMHSDFHQRTSNSSVNRSHHN) form a disordered region. Polar residues predominate over residues 220–232 (RTSNSSVNRSHHN).

It belongs to the NFYC/HAP5 subunit family. In terms of assembly, forms two NF-Y heterotrimeric transcription factor complexes: the nfya-1-NF-Y complex is composed of nfya-1, nfyb-1 and nfyc-1, and the nfya-2-NF-Y complex is composed of nfya-2, nfyb-1 and nfyc-1. Interacts with nfyb-1; the interaction is direct and is required for the interaction with either nfya-1 or nfya-2, and subsequent binding of the complex to the 5'-CCAAT-3' box motif in DNA. In terms of tissue distribution, expressed in certain parts of the gonads with high expression in fertilized oocytes in the uterus and mature oocytes from the distal to the proximal arm of the gonad, but weak expression in the syncytial ovaries and immature oocytes at the beginning of the proximal arm of the gonad. Expressed in the excretory cell, secretory cells in the pharyngeal terminal bulb wall, in the small ganglia surrounding the pharynx and in the neurons running anteriorly to the sensory organs in the head. Not expressed in the intestine, the hypodermis or body wall muscle surrounding the pseudocoelomic space.

Its subcellular location is the nucleus. The protein localises to the cytoplasm. It localises to the perikaryon. Component of sequence-specific heterotrimeric transcription factor (nfya-1-NF-Y and nfya-2-NF-Y) complexes which specifically recognize a 5'-CCAAT-3' box motif found in the promoters of its target genes to regulate their expression and control cellular identity in particular tissue types. In association with the components in the NF-Y complexes, represses the expression of the T-box transcription factor tbx-2 throughout larval development, which most likely restricts its expression to certain tissues. May act to repress txb-2 expression in conjunction with tbx-2 itself, which has an autoregulatory role. In association with the components in the nfya-1-NF-Y complex, negatively regulates the expression of the homeobox protein egl-5 to spatially restrict its expression in tissues such as the head. May regulate egl-5 expression in association with the mes-2-mes-3-mes-6 complex. This Caenorhabditis elegans protein is Nuclear transcription factor Y subunit nfyc-1.